The following is a 192-amino-acid chain: dITP/XTP pyrophosphatase (192 aa).

12–17 (TNNENK) contributes to the substrate binding site. Residues Glu-41 and Asp-70 each coordinate Mg(2+). Asp-70 acts as the Proton acceptor in catalysis. Substrate contacts are provided by residues Ser-71, 145-148 (FGFD), Lys-168, and 173-174 (HR).

It belongs to the HAM1 NTPase family. Homodimer. The cofactor is Mg(2+).

The enzyme catalyses XTP + H2O = XMP + diphosphate + H(+). It carries out the reaction dITP + H2O = dIMP + diphosphate + H(+). It catalyses the reaction ITP + H2O = IMP + diphosphate + H(+). In terms of biological role, pyrophosphatase that catalyzes the hydrolysis of nucleoside triphosphates to their monophosphate derivatives, with a high preference for the non-canonical purine nucleotides XTP (xanthosine triphosphate), dITP (deoxyinosine triphosphate) and ITP. Seems to function as a house-cleaning enzyme that removes non-canonical purine nucleotides from the nucleotide pool, thus preventing their incorporation into DNA/RNA and avoiding chromosomal lesions. This chain is dITP/XTP pyrophosphatase, found in Saccharolobus solfataricus (strain ATCC 35092 / DSM 1617 / JCM 11322 / P2) (Sulfolobus solfataricus).